A 257-amino-acid polypeptide reads, in one-letter code: Pyridoxine/pyridoxamine 5'-phosphate oxidase (257 aa).

33–36 (RIKY) is a substrate binding site. 90-93 (RFVL) is a binding site for FMN. Lys95 contacts pyridoxal 5'-phosphate. Residues 105-106 (YT) and Lys112 contribute to the FMN site. Residues Tyr152, Arg156, and Ser160 each coordinate pyridoxal 5'-phosphate. FMN-binding positions include 169-170 (QS) and Trp216. Position 222 to 224 (222 to 224 (RLH)) interacts with substrate. Position 226 (Arg226) interacts with FMN.

This sequence belongs to the pyridoxamine 5'-phosphate oxidase family. In terms of assembly, homodimer. It depends on FMN as a cofactor. In terms of tissue distribution, expressed in silk gland and fat body of the larva.

The catalysed reaction is pyridoxamine 5'-phosphate + O2 + H2O = pyridoxal 5'-phosphate + H2O2 + NH4(+). It catalyses the reaction pyridoxine 5'-phosphate + O2 = pyridoxal 5'-phosphate + H2O2. It functions in the pathway cofactor metabolism; pyridoxal 5'-phosphate salvage; pyridoxal 5'-phosphate from pyridoxamine 5'-phosphate: step 1/1. Its pathway is cofactor metabolism; pyridoxal 5'-phosphate salvage; pyridoxal 5'-phosphate from pyridoxine 5'-phosphate: step 1/1. Functionally, catalyzes the oxidation of either pyridoxine 5'-phosphate (PNP) or pyridoxamine 5'-phosphate (PMP) into pyridoxal 5'-phosphate (PLP). The sequence is that of Pyridoxine/pyridoxamine 5'-phosphate oxidase from Bombyx mori (Silk moth).